The following is an 81-amino-acid chain: Protein I5 homolog (81 aa).

2 helical membrane-spanning segments follow: residues Leu8–Val28 and Met53–Ile73.

Belongs to the Chordopoxvirinae I5 family.

It localises to the virion membrane. The protein is Protein I5 homolog of Vertebrata (FPV).